The primary structure comprises 499 residues: Alpha-L-arabinofuranosidase B (499 aa).

The N-terminal stretch at 1-18 (MFSRRNLVALGLAATVSA) is a signal peptide. 2 N-linked (GlcNAc...) asparagine glycosylation sites follow: Asn83 and Asn202.

The protein belongs to the glycosyl hydrolase 54 family.

It carries out the reaction Hydrolysis of terminal non-reducing alpha-L-arabinofuranoside residues in alpha-L-arabinosides.. Its pathway is glycan metabolism; L-arabinan degradation. In terms of biological role, able to hydrolyze 1,5-, 1,3- and 1,2-alpha-linkages not only in L-arabinofuranosyl oligosaccharides, but also in polysac-charides containing terminal non-reducing L-arabinofuranoses in side chains, like L-arabinan, arabinogalactan and arabinoxylan. In Aspergillus niger, this protein is Alpha-L-arabinofuranosidase B (abfB).